We begin with the raw amino-acid sequence, 769 residues long: MRLSLFALLVTVFSGVSTQSPIFGPQDVSSIEGNSVSITCYYPDTSVNRHTRKYWCRQGANGYCATLISSNGYLSKEYSGRASLINFPENSTFVINIAHLTQEDTGSYKCGLGTTNRGLFFDVSLEVSQVPEFPNDTHVYTKDIGRTVTIECRFKEGNAHSKKSLCKKRGEACEVVIDSTEYVDPSYKDRAILFMKGTSRDIFYVNISHLIPSDAGLYVCQAGEGPSADKNNADLQVLEPEPELLYKDLRSSVTFECDLGREVANDAKYLCRKNKETCDVIINTLGKRDPAFEGRILLTPRDDNGRFSVLITGLRKEDAGHYQCGAHSSGLPQEGWPVQAWQLFVNEESTIPNSRSVVKGVTGGSVAIVCPYNPKESSSLKYWCHWEADENGRCPVLVGTQALVQEGYEGRLALFDQPGSGAYTVILNQLTTQDSGFYWCLTDGDSRWRTTIELQVAEATKKPDLEVTPQNATAVIGETFTISCHYPCKFYSQEKYWCKWSNDGCHILPSHDEGARQSSVSCDQSSQIVSMTLNPVKKEDEGWYWCGVKEGQVYGETTAIYVAVEERTRGSPHINPTDANARAKDAPEEEAMESSVREDENKANLDPRLFADEREIQNAGDQAQENRASGNAGSAGGQSGSSKVLFSTLVPLGLVLAVGAVAVWVARVRHRKNVDRMSISSYRTDISMGDFRNSRDLGGNDNMGATPDTQETVLEGKDEIETTTECTTEPEESKKAKRSSKEEADMAYSAFLFQSSTIAAQVHDGPQEA.

An N-terminal signal peptide occupies residues 1–18 (MRLSLFALLVTVFSGVST). At 19-643 (QSPIFGPQDV…SAGGQSGSSK (625 aa)) the chain is on the extracellular side. The region spanning 21-126 (PIFGPQDVSS…RGLFFDVSLE (106 aa)) is the Ig-like V-type 1; required for binding to polymeric IgA and IgM domain. A disulfide bridge links cysteine 40 with cysteine 110. N-linked (GlcNAc...) asparagine glycosylation is found at asparagine 90, asparagine 135, and asparagine 206. Ig-like V-type domains are found at residues 135 to 237 (NDTH…DLQV), 240 to 341 (PEPE…VQAW), 353 to 457 (NSRS…LQVA), and 463 to 563 (PDLE…IYVA). 3 disulfide bridges follow: cysteine 152–cysteine 220, cysteine 257–cysteine 324, and cysteine 370–cysteine 440. The N-linked (GlcNAc...) asparagine glycan is linked to asparagine 471. Cysteine 484 and cysteine 546 form a disulfide bridge. Disordered stretches follow at residues 569–604 (RGSP…NKAN) and 619–640 (AGDQ…GQSG). The span at 595 to 604 (SVREDENKAN) shows a compositional bias: basic and acidic residues. The helical transmembrane segment at 644-666 (VLFSTLVPLGLVLAVGAVAVWVA) threads the bilayer. The Cytoplasmic segment spans residues 667–769 (RVRHRKNVDR…AQVHDGPQEA (103 aa)). Serine 678, serine 687, serine 694, and serine 740 each carry phosphoserine. A disordered region spans residues 719–741 (EIETTTECTTEPEESKKAKRSSK). Residues 731 to 741 (EESKKAKRSSK) show a composition bias toward basic and acidic residues.

In terms of assembly, interacts (mainly via CDR1-like domain) with dimeric IgA. Interacts (mainly via CDR2-like domain) with pentameric IgM. Either free or part of the secretory IgA (sIgA) complex that consists of two, four or five IgA monomers, and two additional non-Ig polypeptides, namely the JCHAIN and the secretory component (the proteolytic product of PIGR). Free secretory component interacts with bacterial antigens toxA of C.difficile and eae of E.coli. In terms of processing, N-glycosylated. N-glycosylation is required for anchoring IgA molecules to mucus, but is not necessary for Ig binding.

The protein localises to the cell membrane. Its subcellular location is the secreted. In terms of biological role, mediates selective transcytosis of polymeric IgA and IgM across mucosal epithelial cells. Binds polymeric IgA and IgM at the basolateral surface of epithelial cells. The complex is then transported across the cell to be secreted at the apical surface. During this process, a cleavage occurs that separates the extracellular (known as the secretory component) from the transmembrane segment. Through its N-linked glycans ensures anchoring of secretory IgA (sIgA) molecules to mucus lining the epithelial surface to neutralize extracellular pathogens. On its own (free form) may act as a non-specific microbial scavenger to prevent pathogen interaction with epithelial cells. This chain is Polymeric immunoglobulin receptor (Pigr), found in Rattus norvegicus (Rat).